The following is a 348-amino-acid chain: Major outer membrane protein P.IB (348 aa).

Positions 1 to 19 (MKKSLIALTLAALPVAATA) are cleaved as a signal peptide.

Belongs to the Gram-negative porin family. Homotrimer.

It is found in the cell outer membrane. In terms of biological role, serves as a slightly cation selective porin. Major antigen on the gonococcal cell surface and it may have pathogenic properties in addition to its porin activity. The sequence is that of Major outer membrane protein P.IB (porB) from Neisseria gonorrhoeae.